Reading from the N-terminus, the 417-residue chain is Serpin H1 (417 aa).

Residues 1-17 (MRSLLLGTLCLLAVALA) form the signal peptide. An N6-succinyllysine modification is found at Lys-93. Residues Asn-119 and Asn-124 are each glycosylated (N-linked (GlcNAc...) asparagine). Ser-140 carries the post-translational modification Phosphoserine. N6-acetyllysine is present on Lys-206. Lys-295 bears the N6-succinyllysine mark. Lys-318 carries the N6-acetyllysine modification. Residue Asn-394 is glycosylated (N-linked (GlcNAc...) asparagine). Residues 414–417 (RDEL) carry the Prevents secretion from ER motif.

Belongs to the serpin family.

It localises to the endoplasmic reticulum lumen. In terms of biological role, binds specifically to collagen. Could be involved as a chaperone in the biosynthetic pathway of collagen. The chain is Serpin H1 (Serpinh1) from Rattus norvegicus (Rat).